The sequence spans 224 residues: 7-cyano-7-deazaguanine synthase (224 aa).

Position 10-20 (10-20) interacts with ATP; it reads LSGGLDSATVV. Positions 189, 199, 202, and 205 each coordinate Zn(2+).

This sequence belongs to the QueC family. It depends on Zn(2+) as a cofactor.

It catalyses the reaction 7-carboxy-7-deazaguanine + NH4(+) + ATP = 7-cyano-7-deazaguanine + ADP + phosphate + H2O + H(+). The protein operates within purine metabolism; 7-cyano-7-deazaguanine biosynthesis. Functionally, catalyzes the ATP-dependent conversion of 7-carboxy-7-deazaguanine (CDG) to 7-cyano-7-deazaguanine (preQ(0)). This is 7-cyano-7-deazaguanine synthase from Pseudomonas paraeruginosa (strain DSM 24068 / PA7) (Pseudomonas aeruginosa (strain PA7)).